We begin with the raw amino-acid sequence, 74 residues long: Guanine nucleotide-binding protein G(T) subunit gamma-T1 (74 aa).

C71 is subject to Cysteine methyl ester. Residue C71 is the site of S-farnesyl cysteine attachment. Positions V72–S74 are cleaved as a propeptide — removed in mature form.

It belongs to the G protein gamma family. As to quaternary structure, g proteins are composed of 3 units, alpha, beta and gamma. As to expression, retinal rod outer segment.

Its subcellular location is the cell membrane. Guanine nucleotide-binding proteins (G proteins) are involved as a modulator or transducer in various transmembrane signaling systems. The beta and gamma chains are required for the GTPase activity, for replacement of GDP by GTP, and for G protein-effector interaction. The sequence is that of Guanine nucleotide-binding protein G(T) subunit gamma-T1 (GNGT1) from Canis lupus familiaris (Dog).